The sequence spans 398 residues: 1-deoxy-D-xylulose 5-phosphate reductoisomerase (398 aa).

Residues Thr28, Gly29, Ser30, Ile31, Gly54, Asn57, and Asn135 each contribute to the NADPH site. Lys136 contributes to the 1-deoxy-D-xylulose 5-phosphate binding site. Glu137 contributes to the NADPH binding site. Asp159 is a binding site for Mn(2+). Ser160, Glu161, Ser185, and His208 together coordinate 1-deoxy-D-xylulose 5-phosphate. Position 161 (Glu161) interacts with Mn(2+). NADPH is bound at residue Gly214. Residues Ser221, Asn226, Lys227, and Glu230 each coordinate 1-deoxy-D-xylulose 5-phosphate. Residue Glu230 coordinates Mn(2+).

It belongs to the DXR family. The cofactor is Mg(2+). It depends on Mn(2+) as a cofactor.

It carries out the reaction 2-C-methyl-D-erythritol 4-phosphate + NADP(+) = 1-deoxy-D-xylulose 5-phosphate + NADPH + H(+). It functions in the pathway isoprenoid biosynthesis; isopentenyl diphosphate biosynthesis via DXP pathway; isopentenyl diphosphate from 1-deoxy-D-xylulose 5-phosphate: step 1/6. In terms of biological role, catalyzes the NADPH-dependent rearrangement and reduction of 1-deoxy-D-xylulose-5-phosphate (DXP) to 2-C-methyl-D-erythritol 4-phosphate (MEP). This is 1-deoxy-D-xylulose 5-phosphate reductoisomerase from Rhodococcus jostii (strain RHA1).